The chain runs to 433 residues: Putative ankyrin repeat protein R578 (433 aa).

4 ANK repeats span residues 166–195, 197–224, 356–386, and 388–415; these read NKEIILRNAVITNNLEMLEFAIEKGAILSE, DHLIVQSIRTSNLDLIKYIFSHIDLSKL, VNPNILKTSIYCCNNFDITKYLIDNGADIHS, and PSLIKTAITSGNLKTATFLMDNGAICDE.

In Acanthamoeba polyphaga mimivirus (APMV), this protein is Putative ankyrin repeat protein R578.